Consider the following 362-residue polypeptide: Probable peptidyl-prolyl cis-trans isomerase C27F1.06c (362 aa).

Ser-69 carries the phosphoserine modification. The interval 144-274 is disordered; sequence DEFSSDEEEM…KVKGDGPAAK (131 aa). Acidic residues-rich tracts occupy residues 146-167 and 175-189; these read FSSD…EEEE and LNSD…EEEI. Position 177 is a phosphoserine (Ser-177). Positions 190 to 218 are enriched in basic and acidic residues; that stretch reads LEKPVPKDEVAEKHSKDKLKKEEKEKKTA. Residues 276–362 enclose the PPIase FKBP-type domain; that stretch reads KKRVSMRYIG…VFDVKLLAVN (87 aa).

It belongs to the FKBP-type PPIase family. FKBP3/4 subfamily.

It catalyses the reaction [protein]-peptidylproline (omega=180) = [protein]-peptidylproline (omega=0). In terms of biological role, PPIases accelerate the folding of proteins. It catalyzes the cis-trans isomerization of proline imidic peptide bonds in oligopeptides. In Schizosaccharomyces pombe (strain 972 / ATCC 24843) (Fission yeast), this protein is Probable peptidyl-prolyl cis-trans isomerase C27F1.06c.